The sequence spans 38 residues: Photosystem I reaction center subunit IX (38 aa).

Residues 4–24 (FLTTAPVFSAIWFTLTAGIMI) traverse the membrane as a helical segment.

This sequence belongs to the PsaJ family.

The protein resides in the plastid. The protein localises to the organellar chromatophore thylakoid membrane. May help in the organization of the PsaE and PsaF subunits. The polypeptide is Photosystem I reaction center subunit IX (Paulinella chromatophora).